A 400-amino-acid polypeptide reads, in one-letter code: S-adenosylmethionine synthase (400 aa).

ATP is bound at residue 136-141 (GTGSTD).

It belongs to the AdoMet synthase 2 family. Requires Mg(2+) as cofactor.

It catalyses the reaction L-methionine + ATP + H2O = S-adenosyl-L-methionine + phosphate + diphosphate. It participates in amino-acid biosynthesis; S-adenosyl-L-methionine biosynthesis; S-adenosyl-L-methionine from L-methionine: step 1/1. Its function is as follows. Catalyzes the formation of S-adenosylmethionine from methionine and ATP. This is S-adenosylmethionine synthase from Methanospirillum hungatei JF-1 (strain ATCC 27890 / DSM 864 / NBRC 100397 / JF-1).